Reading from the N-terminus, the 1025-residue chain is Probable beta-galactosidase B (1025 aa).

A signal peptide spans 1–21 (MATAFWLLLFLLGSLHVLTAA). N-linked (GlcNAc...) asparagine glycosylation is present at Asn-23. Residue Tyr-90 coordinates substrate. An N-linked (GlcNAc...) asparagine glycan is attached at Asn-100. 4 residues coordinate substrate: Asn-135, Ala-136, Glu-137, and Asn-195. The active-site Proton donor is the Glu-196. A glycan (N-linked (GlcNAc...) asparagine) is linked at Asn-211. A substrate-binding site is contributed by Tyr-265. Cysteines 271 and 324 form a disulfide. The active-site Nucleophile is the Glu-308. Tyr-373 lines the substrate pocket. N-linked (GlcNAc...) asparagine glycosylation is found at Asn-411, Asn-456, Asn-736, Asn-776, Asn-884, Asn-925, and Asn-926.

The protein belongs to the glycosyl hydrolase 35 family.

It localises to the secreted. It catalyses the reaction Hydrolysis of terminal non-reducing beta-D-galactose residues in beta-D-galactosides.. Cleaves beta-linked terminal galactosyl residues from gangliosides, glycoproteins, and glycosaminoglycans. The chain is Probable beta-galactosidase B (lacB) from Emericella nidulans (strain FGSC A4 / ATCC 38163 / CBS 112.46 / NRRL 194 / M139) (Aspergillus nidulans).